The chain runs to 713 residues: Denticleless protein homolog (713 aa).

WD repeat units follow at residues 47–89, 96–135, and 138–178; these read GAAV…VQRL, AHTNAVFDIAWVPGEHKLVTASGDQTAKLWDVKAGDLIGE, and GHQC…KDGF. Residues 168 to 171 carry the DDB1-binding motif motif; sequence WDTR. The Nuclear localization signal signature appears at 197-204; sequence PSKVKKRK. WD repeat units follow at residues 215-254, 270-309, 314-355, and 359-399; these read DSQQSVTVVIFQDEHTIISAGAVDGIVKVWDLRKNYSAYR, TRKLGYSNLVLDPTGTNLFASCTDDNVYMFNATGLKTEPV, GHQN…VPPV, and GHCQ…EDSA. The DDB1-binding motif signature appears at 244 to 247; sequence WDLR. Disordered regions lie at residues 474 to 544, 604 to 623, and 635 to 700; these read TPQR…EKRA, GFDQEFSPGPSTSFLINGTV, and SDLR…TPGS. Composition is skewed to polar residues over residues 504–516 and 612–623; these read TPKSSTRADTKTP and GPSTSFLINGTV. Residues 635–644 are compositionally biased toward basic and acidic residues; sequence SDLRDKENSS. The segment covering 686–699 has biased composition (polar residues); sequence NAPNSPVSVPTTPG.

It belongs to the WD repeat cdt2 family. In terms of assembly, component of the DCX(DTL) E3 ubiquitin ligase complex, at least composed of cul4 (cul4a or cul4b), ddb1, dtl/cdt2 and rbx1.

The protein localises to the nucleus. It localises to the cytoplasm. It is found in the cytoskeleton. The protein resides in the microtubule organizing center. Its subcellular location is the centrosome. The protein localises to the chromosome. Its pathway is protein modification; protein ubiquitination. Substrate-specific adapter of a DCX (DDB1-CUL4-X-box) E3 ubiquitin-protein ligase complex required for cell cycle control, DNA damage response and translesion DNA synthesis. The DCX(DTL) complex, also named CRL4(CDT2) complex, mediates the polyubiquitination and subsequent degradation of CDT1, CDKN1A/p21(CIP1), KMT5A and SDE2. CDT1 degradation in response to DNA damage is necessary to ensure proper cell cycle regulation of DNA replication. CDKN1A/p21(CIP1) degradation during S phase or following UV irradiation is essential to control replication licensing. KMT5A degradation is also important for a proper regulation of mechanisms such as TGF-beta signaling, cell cycle progression, DNA repair and cell migration. Most substrates require their interaction with PCNA for their polyubiquitination: substrates interact with PCNA via their PIP-box, and those containing the 'K+4' motif in the PIP box, recruit the DCX(DTL) complex, leading to their degradation. In undamaged proliferating cells, the DCX(DTL) complex also promotes the 'Lys-164' monoubiquitination of PCNA, thereby being involved in PCNA-dependent translesion DNA synthesis. May play a role in the regulation of the circadian clock. The polypeptide is Denticleless protein homolog (dtl) (Xenopus tropicalis (Western clawed frog)).